Reading from the N-terminus, the 298-residue chain is NADH-cytochrome b5 reductase 2 (298 aa).

Residues 15-38 (FVLPVAAAAVGLASYSFTSSSFIA) traverse the membrane as a helical segment. The FAD-binding FR-type domain occupies 49 to 153 (DEWIDLKLIS…KGPFVKWKWE (105 aa)). An FAD-binding site is contributed by 156–191 (QFKSIALIGGGTGITPLYQLIHEITKNPADKTQVSL).

Belongs to the flavoprotein pyridine nucleotide cytochrome reductase family. FAD serves as cofactor.

It localises to the mitochondrion outer membrane. It catalyses the reaction 2 Fe(III)-[cytochrome b5] + NADH = 2 Fe(II)-[cytochrome b5] + NAD(+) + H(+). In terms of biological role, may mediate the reduction of outer membrane cytochrome b5. The chain is NADH-cytochrome b5 reductase 2 (MCR1) from Scheffersomyces stipitis (strain ATCC 58785 / CBS 6054 / NBRC 10063 / NRRL Y-11545) (Yeast).